Consider the following 368-residue polypeptide: Spermidine/putrescine import ATP-binding protein PotA (368 aa).

The 231-residue stretch at 8 to 238 (IELKNVSKIF…PVNLFVARFV (231 aa)) folds into the ABC transporter domain. ATP is bound at residue 40–47 (GPSGCGKT).

Belongs to the ABC transporter superfamily. Spermidine/putrescine importer (TC 3.A.1.11.1) family. The complex is composed of two ATP-binding proteins (PotA), two transmembrane proteins (PotB and PotC) and a solute-binding protein (PotD).

The protein localises to the cell membrane. The catalysed reaction is ATP + H2O + polyamine-[polyamine-binding protein]Side 1 = ADP + phosphate + polyamineSide 2 + [polyamine-binding protein]Side 1.. Functionally, part of the ABC transporter complex PotABCD involved in spermidine/putrescine import. Responsible for energy coupling to the transport system. The sequence is that of Spermidine/putrescine import ATP-binding protein PotA from Lawsonia intracellularis (strain PHE/MN1-00).